The primary structure comprises 176 residues: Imidazoleglycerol-phosphate dehydratase (176 aa).

It belongs to the imidazoleglycerol-phosphate dehydratase family.

It is found in the cytoplasm. The enzyme catalyses D-erythro-1-(imidazol-4-yl)glycerol 3-phosphate = 3-(imidazol-4-yl)-2-oxopropyl phosphate + H2O. The protein operates within amino-acid biosynthesis; L-histidine biosynthesis; L-histidine from 5-phospho-alpha-D-ribose 1-diphosphate: step 6/9. This is Imidazoleglycerol-phosphate dehydratase from Pyrococcus furiosus (strain ATCC 43587 / DSM 3638 / JCM 8422 / Vc1).